Consider the following 260-residue polypeptide: Peptidase inhibitor 15-A (260 aa).

Positions M1–A21 are cleaved as a signal peptide. Positions L22–R62 are excised as a propeptide. 2 N-linked (GlcNAc...) asparagine glycosylation sites follow: N37 and N126. Positions L73–Y213 constitute an SCP domain.

Belongs to the CRISP family.

Its subcellular location is the secreted. In terms of biological role, serine protease inhibitor which displays weak inhibitory activity against trypsin. May play a role in facial patterning during embryonic development. The polypeptide is Peptidase inhibitor 15-A (pi15a) (Danio rerio (Zebrafish)).